A 147-amino-acid chain; its full sequence is uncharacterized protein (147 aa).

The segment at 23–48 (EEVSQPEPNTANDSSTEYKGKSKDDF) is disordered. Polar residues predominate over residues 28 to 37 (PEPNTANDSS). The segment covering 38-48 (TEYKGKSKDDF) has biased composition (basic and acidic residues). Residues 85–105 (LMFCIIACSFICAIQFLFFII) form a helical membrane-spanning segment.

It is found in the membrane. This is an uncharacterized protein from Saccharomyces cerevisiae (strain ATCC 204508 / S288c) (Baker's yeast).